Consider the following 347-residue polypeptide: NADH-ubiquinone oxidoreductase chain 2 (347 aa).

11 consecutive transmembrane segments (helical) span residues 3-23 (PPIF…VMTS), 25-45 (HWML…PILM), 59-79 (YFLT…INLL), 96-116 (ILMT…FWVP), 122-142 (ISLS…LSIL), 149-169 (INPH…GWGG), 178-198 (IMAY…LYNP), 201-221 (MFLN…LFML), 237-257 (APLI…LPPL), 274-294 (EMII…YFYM), and 323-343 (TIFL…TPMI).

The protein belongs to the complex I subunit 2 family. As to quaternary structure, core subunit of respiratory chain NADH dehydrogenase (Complex I) which is composed of 45 different subunits. Interacts with TMEM242.

The protein localises to the mitochondrion inner membrane. It carries out the reaction a ubiquinone + NADH + 5 H(+)(in) = a ubiquinol + NAD(+) + 4 H(+)(out). Its function is as follows. Core subunit of the mitochondrial membrane respiratory chain NADH dehydrogenase (Complex I) which catalyzes electron transfer from NADH through the respiratory chain, using ubiquinone as an electron acceptor. Essential for the catalytic activity and assembly of complex I. The protein is NADH-ubiquinone oxidoreductase chain 2 of Viverra tangalunga (Malayan civet).